A 349-amino-acid polypeptide reads, in one-letter code: Sexual stage-specific protein G37 (349 aa).

An N-terminal signal peptide occupies residues Met1–Thr18. The Extracellular portion of the chain corresponds to Phe19 to Arg91. The helical transmembrane segment at Val92–Gly112 threads the bilayer. Residues His113 to Lys117 lie on the Cytoplasmic side of the membrane. A helical membrane pass occupies residues Ala118 to Phe138. Over Asn139–Gly140 the chain is Extracellular. A helical membrane pass occupies residues Ile141–Leu161. Over Gly162–Arg176 the chain is Cytoplasmic. A helical transmembrane segment spans residues Tyr177–Asp197. The Extracellular portion of the chain corresponds to Gly198–Lys218. The helical transmembrane segment at Tyr219 to Ile239 threads the bilayer. The Cytoplasmic portion of the chain corresponds to Lys240 to Tyr262. A helical membrane pass occupies residues Ile263 to Leu283. Residues Ser284–Ser305 are Extracellular-facing. Residues Ser306–Leu326 form a helical membrane-spanning segment. Over Arg327–Ile349 the chain is Cytoplasmic.

It localises to the cell membrane. In terms of biological role, involved in the development of male gametocytes. The chain is Sexual stage-specific protein G37 from Plasmodium berghei (strain Anka).